Here is a 324-residue protein sequence, read N- to C-terminus: Glucokinase (324 aa).

Position 6 to 11 (6 to 11 (IDIGGT)) interacts with ATP.

This sequence belongs to the bacterial glucokinase family.

It localises to the cytoplasm. The enzyme catalyses D-glucose + ATP = D-glucose 6-phosphate + ADP + H(+). This is Glucokinase from Zymomonas mobilis subsp. mobilis (strain ATCC 31821 / ZM4 / CP4).